The chain runs to 305 residues: tRNA dimethylallyltransferase (305 aa).

ATP is bound at residue 14–21 (GPTTSGKT). 16–21 (TTSGKT) lines the substrate pocket. Interaction with substrate tRNA regions lie at residues 39 to 42 (DSAL), 163 to 167 (QRITR), and 243 to 248 (RCVGYR).

This sequence belongs to the IPP transferase family. In terms of assembly, monomer. Mg(2+) serves as cofactor.

The catalysed reaction is adenosine(37) in tRNA + dimethylallyl diphosphate = N(6)-dimethylallyladenosine(37) in tRNA + diphosphate. Catalyzes the transfer of a dimethylallyl group onto the adenine at position 37 in tRNAs that read codons beginning with uridine, leading to the formation of N6-(dimethylallyl)adenosine (i(6)A). The protein is tRNA dimethylallyltransferase of Ruthia magnifica subsp. Calyptogena magnifica.